The sequence spans 519 residues: Maturase K (519 aa).

Belongs to the intron maturase 2 family. MatK subfamily.

It localises to the plastid. The protein localises to the chloroplast. Usually encoded in the trnK tRNA gene intron. Probably assists in splicing its own and other chloroplast group II introns. This chain is Maturase K, found in Dioscorea elephantipes (Elephant's foot yam).